The chain runs to 324 residues: Methionyl-tRNA formyltransferase (324 aa).

114 to 117 (SLLP) contributes to the (6S)-5,6,7,8-tetrahydrofolate binding site.

Belongs to the Fmt family.

It catalyses the reaction L-methionyl-tRNA(fMet) + (6R)-10-formyltetrahydrofolate = N-formyl-L-methionyl-tRNA(fMet) + (6S)-5,6,7,8-tetrahydrofolate + H(+). In terms of biological role, attaches a formyl group to the free amino group of methionyl-tRNA(fMet). The formyl group appears to play a dual role in the initiator identity of N-formylmethionyl-tRNA by promoting its recognition by IF2 and preventing the misappropriation of this tRNA by the elongation apparatus. This Azobacteroides pseudotrichonymphae genomovar. CFP2 protein is Methionyl-tRNA formyltransferase.